The sequence spans 372 residues: sn-glycerol-3-phosphate import ATP-binding protein UgpC (372 aa).

In terms of domain architecture, ABC transporter spans 2–233 (LDIQQLVKTY…PASTFVASFI (232 aa)). 35-42 (GPSGCGKS) contacts ATP.

The protein belongs to the ABC transporter superfamily. sn-glycerol-3-phosphate importer (TC 3.A.1.1.3) family. As to quaternary structure, the complex is composed of two ATP-binding proteins (UgpC), two transmembrane proteins (UgpA and UgpE) and a solute-binding protein (UgpB).

The protein resides in the cell inner membrane. It catalyses the reaction sn-glycerol 3-phosphate(out) + ATP + H2O = sn-glycerol 3-phosphate(in) + ADP + phosphate + H(+). Part of the ABC transporter complex UgpBAEC involved in sn-glycerol-3-phosphate (G3P) import. Responsible for energy coupling to the transport system. This Vibrio vulnificus (strain YJ016) protein is sn-glycerol-3-phosphate import ATP-binding protein UgpC.